Consider the following 472-residue polypeptide: Siroheme synthase (472 aa).

The tract at residues 1–204 (MDYLPIFTKL…GQTEKAIALM (204 aa)) is precorrin-2 dehydrogenase /sirohydrochlorin ferrochelatase. NAD(+)-binding positions include 22–23 (SI) and 43–44 (LE). Position 128 is a phosphoserine (Ser-128). Residues 215–472 (GDVALVGAGP…SRDPFLVNLA (258 aa)) are uroporphyrinogen-III C-methyltransferase. Pro-224 contributes to the S-adenosyl-L-methionine binding site. Asp-247 acts as the Proton acceptor in catalysis. Lys-269 acts as the Proton donor in catalysis. S-adenosyl-L-methionine-binding positions include 300–302 (GGD), Ile-305, 330–331 (TA), Met-382, and Gly-411.

It in the N-terminal section; belongs to the precorrin-2 dehydrogenase / sirohydrochlorin ferrochelatase family. The protein in the C-terminal section; belongs to the precorrin methyltransferase family.

It catalyses the reaction uroporphyrinogen III + 2 S-adenosyl-L-methionine = precorrin-2 + 2 S-adenosyl-L-homocysteine + H(+). It carries out the reaction precorrin-2 + NAD(+) = sirohydrochlorin + NADH + 2 H(+). The catalysed reaction is siroheme + 2 H(+) = sirohydrochlorin + Fe(2+). It participates in cofactor biosynthesis; adenosylcobalamin biosynthesis; precorrin-2 from uroporphyrinogen III: step 1/1. The protein operates within cofactor biosynthesis; adenosylcobalamin biosynthesis; sirohydrochlorin from precorrin-2: step 1/1. Its pathway is porphyrin-containing compound metabolism; siroheme biosynthesis; precorrin-2 from uroporphyrinogen III: step 1/1. It functions in the pathway porphyrin-containing compound metabolism; siroheme biosynthesis; siroheme from sirohydrochlorin: step 1/1. It participates in porphyrin-containing compound metabolism; siroheme biosynthesis; sirohydrochlorin from precorrin-2: step 1/1. Its function is as follows. Multifunctional enzyme that catalyzes the SAM-dependent methylations of uroporphyrinogen III at position C-2 and C-7 to form precorrin-2 via precorrin-1. Then it catalyzes the NAD-dependent ring dehydrogenation of precorrin-2 to yield sirohydrochlorin. Finally, it catalyzes the ferrochelation of sirohydrochlorin to yield siroheme. The protein is Siroheme synthase of Psychromonas ingrahamii (strain DSM 17664 / CCUG 51855 / 37).